The following is a 962-amino-acid chain: Glutamate receptor 1 (962 aa).

Positions 1 to 25 (MFSSFSFLNMFGVLFTVFNLTVVQP) are cleaved as a signal peptide. Residues 26–591 (YPSHIIIKSF…SVFSFMQPLS (566 aa)) are Extracellular-facing. N190, N220, N275, N333, N441, and N482 each carry an N-linked (GlcNAc...) asparagine glycan. Residues 592 to 612 (TEIWMYIIFAYIGVSVVIFLV) form a helical membrane-spanning segment. Residues 613-668 (SRFSPYEWRVEETSRGGFTISNDFSVYNCLWFTLAAFMQQGTDILPRSISGRIASS) are Cytoplasmic-facing. A helical membrane pass occupies residues 669–689 (AWWFFTMIIVSSYTANLAAFL). The Extracellular portion of the chain corresponds to 690-855 (TLEKMQAPIE…GSSASLNLSK (166 aa)). N-linked (GlcNAc...) asparagine glycosylation is present at N852. Residues 856-876 (VAGIFYILMGGMVISMLAALG) form a helical membrane-spanning segment. Residues 877 to 962 (EFLYRSRIEA…PANTLYNTAV (86 aa)) lie on the Cytoplasmic side of the membrane.

Belongs to the glutamate-gated ion channel (TC 1.A.10.1) family. In terms of assembly, interacts with sol-1. Interacts with cni-1; the interaction negatively regulates export of glr-1 from the endoplasmic reticulum to synapses. Interacts with usp-46; the interaction results in deubiquitination of glr-1. Post-translationally, ubiquitinated. Deubiquitinated by usp-46 which prevents its degradation. Glycosylated. Command interneurons of the locomotory control circuit (AIB, AVA, AVB, AVD, AVE and PVC) and motor neurons (RMD, RIM, SMD, AVG, PVQ and URY).

Its subcellular location is the postsynaptic cell membrane. It is found in the endoplasmic reticulum. The protein localises to the synapse. The protein resides in the cell membrane. It localises to the recycling endosome. Its subcellular location is the cell projection. It is found in the dendrite. The protein localises to the perikaryon. In terms of biological role, non-NMDA (N-methyl-D-aspartate) ionotropic glutamate receptor. L-glutamate acts as an excitatory neurotransmitter at many synapses in the central nervous system. The postsynaptic actions of glutamate are mediated by a variety of receptors that are named according to their selective agonists. May contribute to a sensory discrimination between mechanical and chemical stimuli. Plays a role in controlling movement in response to environmental cues such as food availability and mechanosensory stimulation such as the nose touch response. In AIB interneurons, promotes omega turns, a movement that frequently follows backwards locomotion or 'reversals' in response to environmental cues while possibly playing an inhibitory role in alternative neurons to inhibit omega turns. The chain is Glutamate receptor 1 from Caenorhabditis elegans.